The following is a 3550-amino-acid chain: Zinc finger homeobox protein 4 (3550 aa).

Met1 bears the N-acetylmethionine mark. 3 disordered regions span residues 1–54 (METC…LKTD), 426–479 (HLSS…AYSN), and 521–614 (TSSS…IECP). Positions 9–20 (ISRQENGQSTSK) are enriched in polar residues. Basic and acidic residues-rich tracts occupy residues 39–54 (EPDRENSSSHDNLKTD) and 433–451 (KMSESKDQENNCERPKEST). Over residues 467–479 (EPGDEDEEDAYSN) the composition is skewed to acidic residues. Polar residues-rich tracts occupy residues 542–553 (GRSNGNVTNSYS) and 566–576 (RDGTTAAPSET). 3 consecutive C2H2-type zinc fingers follow at residues 611–634 (IECPKCDTVLGSSRSLGGHMTMMH), 642–665 (LKCPKCNWHYKYQQTLEAHMKEKH), and 697–721 (FRCEVCNYSTTTKGNLSIHMQSDKH). Residues 739–763 (HSAPTPNTSLSGCGTPSPSKPKQKP) are disordered. Residues 742 to 752 (PTPNTSLSGCG) are compositionally biased toward polar residues. C2H2-type zinc fingers lie at residues 765–787 (RRCEVCDYETNVARNLRIHMTSE), 915–939 (YQCKLCNYNTQLKANFQLHCKTDKH), 971–993 (LKCNACDYYTNSVDKLRLHTTNH), and 1019–1043 (YYCAVCDYSSKIKLNLVQHVRSVKH). The tract at residues 1100 to 1142 (KAASEEPSEDAGDPLKPPTVAEDDEKEAHKRDNSEGKISTKDP) is disordered. Residues 1125-1142 (KEAHKRDNSEGKISTKDP) show a composition bias toward basic and acidic residues. Lys1165 participates in a covalent cross-link: Glycyl lysine isopeptide (Lys-Gly) (interchain with G-Cter in SUMO2). 2 consecutive C2H2-type zinc fingers follow at residues 1188 to 1211 (YQYPCCNYNSRDQSRIQMHVLSQH) and 1217 to 1240 (ICCPLCQDVLSNKMHLQLHLTHLH). Positions 1271 to 1339 (APEKSEQDPP…EWNKTSSKDV (69 aa)) are disordered. The span at 1297–1326 (VDDKSMSGLEDSKVGVEIKNEEQKPAKEPV) shows a compositional bias: basic and acidic residues. A Glycyl lysine isopeptide (Lys-Gly) (interchain with G-Cter in SUMO2) cross-link involves residue Lys1315. C2H2-type zinc fingers lie at residues 1368–1390 (YRCNHCSLAFKTMQKLQIHSQYH) and 1396–1419 (TMCTLCQRSFRTFQALKKHLEAGH). The interval 1467-1492 (EGKASPVESDGSSIPDDLGLEPKRTL) is disordered. Residues 1512 to 1538 (YKCTVCKESFTQKNILLVHYNSVSHLH) form a C2H2-type 12 zinc finger. Lys1562 participates in a covalent cross-link: Glycyl lysine isopeptide (Lys-Gly) (interchain with G-Cter in SUMO2). A C2H2-type 13 zinc finger spans residues 1564-1588 (YKCSTCSVAYSQSSTLEIHMRSVLH). Residues 1779–1873 (PQLQPQNQQP…CIPPPRIASG (95 aa)) are disordered. The segment covering 1792 to 1808 (QQQQPQQQPSKLLKQEQ) has biased composition (low complexity). Lys1805 participates in a covalent cross-link: Glycyl lysine isopeptide (Lys-Gly) (interchain with G-Cter in SUMO2). The segment covering 1823-1860 (PSYKEAEEVTEKQEKPKQEFINDTEGLKDSKDIKKQKS) has biased composition (basic and acidic residues). A C2H2-type 14 zinc finger spans residues 1916-1939 (LECGICGKLFSNVLILKSHQEHVH). Positions 1984 to 2006 (KIPNTVSAPLQAPPPTPPSAPQQ) are disordered. A compositionally biased stretch (pro residues) spans 1994–2003 (QAPPPTPPSA). DNA-binding regions (homeobox) lie at residues 2069–2128 (FKRP…RQRN) and 2166–2225 (KRSS…RKSY). The C2H2-type 15; degenerate zinc-finger motif lies at 2252 to 2276 (YQCKKCNVVFPRIFDLITHQKKQCY). The span at 2318 to 2331 (TLVASSGSGTSTPL) shows a compositional bias: polar residues. The tract at residues 2318-2412 (TLVASSGSGT…SQTPIPSSPL (95 aa)) is disordered. Residues 2337 to 2355 (PEPEKNSPKTEYPGEKTKQ) show a composition bias toward basic and acidic residues. Positions 2356–2376 (SDPSLPQGTKSAPSSVLTSSE) are enriched in polar residues. Residues 2383–2392 (PQPPTQPPKQ) are compositionally biased toward pro residues. Residues 2401 to 2412 (SASQTPIPSSPL) show a composition bias toward polar residues. The C2H2-type 16 zinc-finger motif lies at 2430 to 2452 (YPCDQCTLAFPTLELWKEHQHMH). Over residues 2490–2508 (GSSLTQMPPQTSTAHTTAP) the composition is skewed to polar residues. The disordered stretch occupies residues 2490–2545 (GSSLTQMPPQTSTAHTTAPASVAASLKRKLEDKEDNNCSEKEGGNSGEDQHRDKRL). A compositionally biased stretch (basic and acidic residues) spans 2517–2541 (RKLEDKEDNNCSEKEGGNSGEDQHR). A DNA-binding region (homeobox 3) is located at residues 2542-2601 (DKRLRTTITPEQLEILYEKYLLDSNPTRKMLDHIAREVGLKKRVVQVWFQNTRARERKGQ). A C2H2-type 17 zinc finger spans residues 2612–2635 (KRCPFCRALFKAKSALESHIRSRH). At Ser2645 the chain carries Phosphoserine. 2 disordered regions span residues 2746-2791 (AISD…ATTP) and 2810-2866 (HFND…PGHK). Residues 2781-2791 (LDSLQKPATTP) show a composition bias toward polar residues. Positions 2811–2820 (FNDKDGDHDQ) are enriched in basic and acidic residues. Positions 2843–2855 (PSSPNPFGSSNPF) are enriched in low complexity. Residues 2865 to 2924 (HKRFRTQMSNLQLKVLKACFSDYRTPTMQECEMLGNEIGLPKRVVQVWFQNARAKERKFK) constitute a DNA-binding region (homeobox 4). A C2H2-type 18 zinc finger spans residues 2943–2967 (PECTLCGVKYSARLSIRDHIFSKQH). Disordered stretches follow at residues 3051 to 3156 (PSSL…EEKI) and 3261 to 3318 (QDSL…VQLD). Positions 3058–3068 (PQNSNTLTSPG) are enriched in polar residues. A compositionally biased stretch (low complexity) spans 3075-3088 (PSSATSSPALSLSS). Over residues 3097 to 3109 (TPPPPPPPPPPPS) the composition is skewed to pro residues. The segment covering 3136 to 3156 (IKEEESEAIKPEKHPKKEEKI) has biased composition (basic and acidic residues). Lys3137 participates in a covalent cross-link: Glycyl lysine isopeptide (Lys-Gly) (interchain with G-Cter in SUMO2). Residues 3248–3277 (ALLQQYQQYQQSLQDSLQKQQKQQQEQQQK) are a coiled coil. The segment covering 3261-3276 (QDSLQKQQKQQQEQQQ) has biased composition (low complexity). Residues 3298 to 3318 (SETKEEKSTAPESTKEEVQLD) show a composition bias toward basic and acidic residues. A C2H2-type 19; degenerate zinc finger spans residues 3337–3361 (FVCRKCQMMFTDEDATVNHQKSFCY). A C2H2-type 20 zinc finger spans residues 3381-3405 (YQCLACDLALSGNEALSQHLQSSLH). The tract at residues 3424–3445 (LPHSVCSPPPNTSSTSPSAASS) is disordered. Over residues 3435 to 3445 (TSSTSPSAASS) the composition is skewed to low complexity.

This sequence belongs to the krueppel C2H2-type zinc-finger protein family. Expressed in brain, heart, lung, muscle and small intestine. No expression detected in undifferentiated P19 cells, however, expression was seen following retinoic acid treatment to induce neuronal differentiation. Expressed in undifferentiated C2C12 cells, following induction of muscle differentiation in a low-serum medium, expression levels were decreased.

The protein localises to the nucleus. May play a role in neural and muscle differentiation. May be involved in transcriptional regulation. The protein is Zinc finger homeobox protein 4 (Zfhx4) of Mus musculus (Mouse).